We begin with the raw amino-acid sequence, 377 residues long: Succinyl-diaminopimelate desuccinylase (377 aa).

Histidine 67 lines the Zn(2+) pocket. Aspartate 69 is an active-site residue. Aspartate 100 lines the Zn(2+) pocket. Glutamate 134 serves as the catalytic Proton acceptor. Zn(2+) contacts are provided by glutamate 135, glutamate 163, and histidine 349.

It belongs to the peptidase M20A family. DapE subfamily. Homodimer. Requires Zn(2+) as cofactor. It depends on Co(2+) as a cofactor.

It carries out the reaction N-succinyl-(2S,6S)-2,6-diaminopimelate + H2O = (2S,6S)-2,6-diaminopimelate + succinate. It functions in the pathway amino-acid biosynthesis; L-lysine biosynthesis via DAP pathway; LL-2,6-diaminopimelate from (S)-tetrahydrodipicolinate (succinylase route): step 3/3. Its function is as follows. Catalyzes the hydrolysis of N-succinyl-L,L-diaminopimelic acid (SDAP), forming succinate and LL-2,6-diaminopimelate (DAP), an intermediate involved in the bacterial biosynthesis of lysine and meso-diaminopimelic acid, an essential component of bacterial cell walls. The chain is Succinyl-diaminopimelate desuccinylase from Mannheimia succiniciproducens (strain KCTC 0769BP / MBEL55E).